We begin with the raw amino-acid sequence, 181 residues long: ATP synthase subunit delta (181 aa).

The protein belongs to the ATPase delta chain family. As to quaternary structure, F-type ATPases have 2 components, F(1) - the catalytic core - and F(0) - the membrane proton channel. F(1) has five subunits: alpha(3), beta(3), gamma(1), delta(1), epsilon(1). F(0) has three main subunits: a(1), b(2) and c(10-14). The alpha and beta chains form an alternating ring which encloses part of the gamma chain. F(1) is attached to F(0) by a central stalk formed by the gamma and epsilon chains, while a peripheral stalk is formed by the delta and b chains.

It is found in the cell membrane. F(1)F(0) ATP synthase produces ATP from ADP in the presence of a proton or sodium gradient. F-type ATPases consist of two structural domains, F(1) containing the extramembraneous catalytic core and F(0) containing the membrane proton channel, linked together by a central stalk and a peripheral stalk. During catalysis, ATP synthesis in the catalytic domain of F(1) is coupled via a rotary mechanism of the central stalk subunits to proton translocation. Its function is as follows. This protein is part of the stalk that links CF(0) to CF(1). It either transmits conformational changes from CF(0) to CF(1) or is implicated in proton conduction. This Desulforamulus reducens (strain ATCC BAA-1160 / DSM 100696 / MI-1) (Desulfotomaculum reducens) protein is ATP synthase subunit delta.